The following is a 127-amino-acid chain: CST complex subunit TEN1 (127 aa).

The protein belongs to the TEN1 family. Component of the CST complex, composed of CTC1, TEN1 and STN1. Interacts with STN1. No interaction with POT1A, but competes with it for STN1 binding. In terms of tissue distribution, ubiquitous. High expression in meristematic tissues and in vasculature.

It localises to the nucleus. It is found in the chromosome. Its subcellular location is the telomere. Functionally, required for the maintenance of meristems and stem cells through the reduction of DNA damage. Promotes telomere integrity by maintaining telomere length and proper architecture of the chromosome terminus. Negatively regulates telomerase repeat addition processivity. Hampers contacts between enzymatically active telomerase and CST complex. The chain is CST complex subunit TEN1 from Arabidopsis thaliana (Mouse-ear cress).